The primary structure comprises 277 residues: Phosphatidylglycerol--prolipoprotein diacylglyceryl transferase (277 aa).

Helical transmembrane passes span 18–38, 54–74, 91–111, and 115–135; these read IAIY…YFMA, DLLV…YVIF, EGGI…IVFA, and GLSF…GQAI. R137 contributes to the a 1,2-diacyl-sn-glycero-3-phospho-(1'-sn-glycerol) binding site. 3 consecutive transmembrane segments (helical) span residues 177–197, 205–225, and 236–256; these read QPTF…LLLL, GELF…IEGM, and LRTA…LWVY.

The protein belongs to the Lgt family.

The protein resides in the cell membrane. The catalysed reaction is L-cysteinyl-[prolipoprotein] + a 1,2-diacyl-sn-glycero-3-phospho-(1'-sn-glycerol) = an S-1,2-diacyl-sn-glyceryl-L-cysteinyl-[prolipoprotein] + sn-glycerol 1-phosphate + H(+). It functions in the pathway protein modification; lipoprotein biosynthesis (diacylglyceryl transfer). In terms of biological role, catalyzes the transfer of the diacylglyceryl group from phosphatidylglycerol to the sulfhydryl group of the N-terminal cysteine of a prolipoprotein, the first step in the formation of mature lipoproteins. The chain is Phosphatidylglycerol--prolipoprotein diacylglyceryl transferase from Shouchella clausii (strain KSM-K16) (Alkalihalobacillus clausii).